The chain runs to 568 residues: 2-succinyl-5-enolpyruvyl-6-hydroxy-3-cyclohexene-1-carboxylate synthase (568 aa).

It belongs to the TPP enzyme family. MenD subfamily. Homodimer. Requires Mg(2+) as cofactor. The cofactor is Mn(2+). Thiamine diphosphate is required as a cofactor.

It catalyses the reaction isochorismate + 2-oxoglutarate + H(+) = 5-enolpyruvoyl-6-hydroxy-2-succinyl-cyclohex-3-ene-1-carboxylate + CO2. It participates in quinol/quinone metabolism; 1,4-dihydroxy-2-naphthoate biosynthesis; 1,4-dihydroxy-2-naphthoate from chorismate: step 2/7. Its pathway is cofactor biosynthesis; phylloquinone biosynthesis. Catalyzes the thiamine diphosphate-dependent decarboxylation of 2-oxoglutarate and the subsequent addition of the resulting succinic semialdehyde-thiamine pyrophosphate anion to isochorismate to yield 2-succinyl-5-enolpyruvyl-6-hydroxy-3-cyclohexene-1-carboxylate (SEPHCHC). The chain is 2-succinyl-5-enolpyruvyl-6-hydroxy-3-cyclohexene-1-carboxylate synthase from Synechococcus sp. (strain CC9902).